The primary structure comprises 342 residues: Pyridoxal 4-dehydrogenase (342 aa).

Asp-56 is a catalytic residue. Residue Tyr-61 is the Proton donor of the active site. The active site involves Lys-86. 245–255 (GVFNSGILAAP) serves as a coordination point for NADP(+).

It belongs to the aldo/keto reductase family. Homodimer.

The catalysed reaction is pyridoxal + NAD(+) = 4-pyridoxolactone + NADH + H(+). Its pathway is cofactor degradation; B6 vitamer degradation; 4-pyridoxate from pyridoxal: step 1/2. This is Pyridoxal 4-dehydrogenase (pld1) from Microbacterium luteolum (Aureobacterium luteolum).